The following is a 421-amino-acid chain: ATP-dependent RNA helicase RhlB (421 aa).

Residues 9–37 carry the Q motif motif; it reads QKFSDFALHPAVIEALEKKGFHNCTPIQA. In terms of domain architecture, Helicase ATP-binding spans 40–219; it reads LPLTLEGRDV…FEQMNNAEYV (180 aa). 53-60 is a binding site for ATP; that stretch reads AQTGTGKT. A DEAD box motif is present at residues 165 to 168; that stretch reads DEAD. Residues 245 to 390 form the Helicase C-terminal domain; sequence RLLQTLLEEE…VSKYNPDALM (146 aa). A disordered region spans residues 396-421; sequence PLRLTRARPGNGPRRNGPPRNRRRSG. The span at 403-414 shows a compositional bias: low complexity; sequence RPGNGPRRNGPP.

It belongs to the DEAD box helicase family. RhlB subfamily. As to quaternary structure, component of the RNA degradosome, which is a multiprotein complex involved in RNA processing and mRNA degradation.

The protein resides in the cytoplasm. It carries out the reaction ATP + H2O = ADP + phosphate + H(+). In terms of biological role, DEAD-box RNA helicase involved in RNA degradation. Has RNA-dependent ATPase activity and unwinds double-stranded RNA. The sequence is that of ATP-dependent RNA helicase RhlB from Klebsiella pneumoniae subsp. pneumoniae (strain ATCC 700721 / MGH 78578).